Here is a 527-residue protein sequence, read N- to C-terminus: Acyl-coenzyme A thioesterase 4, mitochondrial (527 aa).

The N-terminal 75 residues, 1–75 (MMTPIGIRIR…FLFDPPPIRF (75 aa)), are a transit peptide targeting the mitochondrion. HotDog ACOT-type domains follow at residues 172 to 294 (ILYN…RDSK) and 370 to 487 (KDTC…GPEA).

The protein belongs to the acyl coenzyme A hydrolase family. As to expression, mostly expressed at low levels in glandular trichomes (lupulin glands), and, to a lower extent, in stems, leaves, flowers and cones.

The protein localises to the mitochondrion. The catalysed reaction is 2-methylpropanoyl-CoA + H2O = 2-methylpropanoate + CoA + H(+). It catalyses the reaction propanoyl-CoA + H2O = propanoate + CoA + H(+). It carries out the reaction octanoyl-CoA + H2O = octanoate + CoA + H(+). The enzyme catalyses butanoyl-CoA + H2O = butanoate + CoA + H(+). The catalysed reaction is 3-methylbutanoyl-CoA + H2O = 3-methylbutanoate + CoA + H(+). It catalyses the reaction 2-methylbutanoyl-CoA + H2O = 2-methylbutanoate + CoA + H(+). In terms of biological role, acyl-CoA thioesterases are a group of enzymes that catalyze the hydrolysis of acyl-CoAs to the free fatty acid and coenzyme A (CoASH), providing the potential to regulate intracellular levels of acyl-CoAs, free fatty acids and CoASH. Active on acyl CoAs with short chains (propanoyl-CoA and butanoyl-CoA), branched short chains (2-methylpropanoyl-CoA, 2-methylbutanoyl-CoA and 3-methylbutanoyl-CoA) and medium chains (octanoyl-CoA). The polypeptide is Acyl-coenzyme A thioesterase 4, mitochondrial (Humulus lupulus (European hop)).